The primary structure comprises 187 residues: UPF0301 protein Sputcn32_2681 (187 aa).

Belongs to the UPF0301 (AlgH) family.

The sequence is that of UPF0301 protein Sputcn32_2681 from Shewanella putrefaciens (strain CN-32 / ATCC BAA-453).